We begin with the raw amino-acid sequence, 356 residues long: UDP-3-O-acylglucosamine N-acyltransferase (356 aa).

Histidine 251 functions as the Proton acceptor in the catalytic mechanism.

It belongs to the transferase hexapeptide repeat family. LpxD subfamily. As to quaternary structure, homotrimer.

It carries out the reaction a UDP-3-O-[(3R)-3-hydroxyacyl]-alpha-D-glucosamine + a (3R)-hydroxyacyl-[ACP] = a UDP-2-N,3-O-bis[(3R)-3-hydroxyacyl]-alpha-D-glucosamine + holo-[ACP] + H(+). The protein operates within bacterial outer membrane biogenesis; LPS lipid A biosynthesis. In terms of biological role, catalyzes the N-acylation of UDP-3-O-acylglucosamine using 3-hydroxyacyl-ACP as the acyl donor. Is involved in the biosynthesis of lipid A, a phosphorylated glycolipid that anchors the lipopolysaccharide to the outer membrane of the cell. The polypeptide is UDP-3-O-acylglucosamine N-acyltransferase (Ralstonia nicotianae (strain ATCC BAA-1114 / GMI1000) (Ralstonia solanacearum)).